Here is a 415-residue protein sequence, read N- to C-terminus: Serine/threonine transporter SstT (415 aa).

9 consecutive transmembrane segments (helical) span residues 21 to 41 (ILLG…AALA), 45 to 65 (LGTL…LMLV), 83 to 103 (ILFL…VLSV), 142 to 162 (ALLN…GLAF), 193 to 213 (LGIF…ALWG), 217 to 237 (LLMV…PLIV), 299 to 319 (MAGA…TLGI), 331 to 351 (VVAS…LLLI), and 358 to 378 (FGIS…IGVL).

The protein belongs to the dicarboxylate/amino acid:cation symporter (DAACS) (TC 2.A.23) family.

It is found in the cell inner membrane. It carries out the reaction L-serine(in) + Na(+)(in) = L-serine(out) + Na(+)(out). The catalysed reaction is L-threonine(in) + Na(+)(in) = L-threonine(out) + Na(+)(out). Functionally, involved in the import of serine and threonine into the cell, with the concomitant import of sodium (symport system). This is Serine/threonine transporter SstT from Pectobacterium carotovorum subsp. carotovorum (strain PC1).